A 1399-amino-acid polypeptide reads, in one-letter code: DNA-directed RNA polymerase subunit beta' (1399 aa).

C71, C73, C86, and C89 together coordinate Zn(2+). D462, D464, and D466 together coordinate Mg(2+). Residues C810, C884, C891, and C894 each coordinate Zn(2+). Residues 1379-1399 (KQAAIVPSQPEPQPLALPPAE) form a disordered region. A compositionally biased stretch (pro residues) spans 1387–1399 (QPEPQPLALPPAE).

Belongs to the RNA polymerase beta' chain family. As to quaternary structure, the RNAP catalytic core consists of 2 alpha, 1 beta, 1 beta' and 1 omega subunit. When a sigma factor is associated with the core the holoenzyme is formed, which can initiate transcription. It depends on Mg(2+) as a cofactor. Requires Zn(2+) as cofactor.

The enzyme catalyses RNA(n) + a ribonucleoside 5'-triphosphate = RNA(n+1) + diphosphate. In terms of biological role, DNA-dependent RNA polymerase catalyzes the transcription of DNA into RNA using the four ribonucleoside triphosphates as substrates. The polypeptide is DNA-directed RNA polymerase subunit beta' (Bradyrhizobium sp. (strain ORS 278)).